Consider the following 517-residue polypeptide: Ribose import ATP-binding protein RbsA 2 (517 aa).

ABC transporter domains are found at residues 10–245 (LRIE…GRSI) and 255–498 (DAGE…VSTH). 42-49 (GENGAGKS) is an ATP binding site. The segment at 497-517 (THTGNSPHSGGTDGTEASRGH) is disordered.

This sequence belongs to the ABC transporter superfamily. Ribose importer (TC 3.A.1.2.1) family. As to quaternary structure, the complex is composed of an ATP-binding protein (RbsA), two transmembrane proteins (RbsC) and a solute-binding protein (RbsB).

The protein localises to the cell membrane. The catalysed reaction is D-ribose(out) + ATP + H2O = D-ribose(in) + ADP + phosphate + H(+). Its function is as follows. Part of the ABC transporter complex RbsABC involved in ribose import. Responsible for energy coupling to the transport system. The chain is Ribose import ATP-binding protein RbsA 2 from Streptomyces coelicolor (strain ATCC BAA-471 / A3(2) / M145).